Here is a 288-residue protein sequence, read N- to C-terminus: S-methyl-5'-thioadenosine phosphorylase (288 aa).

Phosphate contacts are provided by residues Ser-12, 54 to 55 (RH), and 87 to 88 (SA). Met-186 lines the substrate pocket. Position 187 (Thr-187) interacts with phosphate. 210–212 (DYD) contributes to the substrate binding site.

Belongs to the PNP/MTAP phosphorylase family. MTAP subfamily. As to quaternary structure, homohexamer. Dimer of a homotrimer.

The enzyme catalyses S-methyl-5'-thioadenosine + phosphate = 5-(methylsulfanyl)-alpha-D-ribose 1-phosphate + adenine. It functions in the pathway amino-acid biosynthesis; L-methionine biosynthesis via salvage pathway; S-methyl-5-thio-alpha-D-ribose 1-phosphate from S-methyl-5'-thioadenosine (phosphorylase route): step 1/1. In terms of biological role, catalyzes the reversible phosphorylation of S-methyl-5'-thioadenosine (MTA) to adenine and 5-methylthioribose-1-phosphate. Involved in the breakdown of MTA, a major by-product of polyamine biosynthesis. Responsible for the first step in the methionine salvage pathway after MTA has been generated from S-adenosylmethionine. Has broad substrate specificity with 6-aminopurine nucleosides as preferred substrates. The chain is S-methyl-5'-thioadenosine phosphorylase from Chloroflexus aurantiacus (strain ATCC 29366 / DSM 635 / J-10-fl).